The following is a 287-amino-acid chain: 3-hydroxyanthranilate 3,4-dioxygenase (287 aa).

The interval 1–163 (MTNQSLHVNI…SKENETGKPD (163 aa)) is domain A (catalytic). Position 46 (arginine 46) interacts with O2. Fe cation contacts are provided by histidine 50, glutamate 56, and histidine 94. Position 56 (glutamate 56) interacts with substrate. Residues arginine 98 and glutamate 108 each contribute to the substrate site. Residues 164 to 180 (PANPIKPAPYPLNTMNV) are linker. The domain B stretch occupies residues 181-287 (MTPFSFREWV…AQDPDRKRPY (107 aa)).

It belongs to the 3-HAO family. Monomer. It depends on Fe(2+) as a cofactor.

The protein resides in the cytoplasm. It is found in the cytosol. The catalysed reaction is 3-hydroxyanthranilate + O2 = (2Z,4Z)-2-amino-3-carboxymuconate 6-semialdehyde. It functions in the pathway cofactor biosynthesis; NAD(+) biosynthesis; quinolinate from L-kynurenine: step 3/3. In terms of biological role, catalyzes the oxidative ring opening of 3-hydroxyanthranilate to 2-amino-3-carboxymuconate semialdehyde, which spontaneously cyclizes to quinolinate. In Danio rerio (Zebrafish), this protein is 3-hydroxyanthranilate 3,4-dioxygenase (haao).